The sequence spans 1078 residues: Teashirt homolog 1-A (1078 aa).

Disordered regions lie at residues 1 to 110, 140 to 197, and 271 to 300; these read MPRR…NVSY, KSNE…SNSA, and GHYR…MEME. Positions 26-36 are enriched in acidic residues; it reads IEEDNLEDDGL. Residues 57–71 are compositionally biased toward polar residues; it reads PSYQNSPISSATNQD. The segment covering 143–197 has biased composition (low complexity); that stretch reads ENSSPTTNTNKSSMSEATGSTSDPDTPTTIPSSSCTNTSTSISVTTSNSTNSNSA. C2H2-type zinc fingers lie at residues 248 to 272 and 309 to 333; these read FKCK…ETGH and LKCM…KTKH. Basic and acidic residues predominate over residues 271–286; sequence GHYRDDNKDRDAERTK. The disordered stretch occupies residues 365 to 394; the sequence is DSPEQAGISPGASVSESAKDPKAANPYVTP. The C2H2-type 3 zinc finger occupies 418–442; sequence LKCMECGSSHDSLQQLTAHMMVTGH. 2 disordered regions span residues 472-524 and 850-877; these read LPPT…ENED and RLTP…EAMD. A compositionally biased stretch (basic and acidic residues) spans 497-524; that stretch reads HSEEKKDPEKEKVNNCEVEKRIKEENED. Residues 853–862 are compositionally biased toward polar residues; sequence PKSSTPSTVS. The segment at residues 885-955 is a DNA-binding region (homeobox); sequence RKGRQSNWNP…NVKYQLRRTG (71 aa). 2 C2H2-type zinc fingers span residues 970 to 992 and 1038 to 1061; these read FFCN…LETH and FQCK…SKTH.

It belongs to the teashirt C2H2-type zinc-finger protein family.

The protein localises to the nucleus. Functionally, probable transcriptional regulator involved in developmental processes. May act as a transcriptional repressor (Potential). Involved in two major neuronal regionalization processes: primary anteroposterior (AP) axis patterning of the CNS and segmentation of the cranial neuronal crest (CNS) development. This is Teashirt homolog 1-A (tshz1-a) from Xenopus laevis (African clawed frog).